The sequence spans 404 residues: Formate-dependent phosphoribosylglycinamide formyltransferase (404 aa).

N(1)-(5-phospho-beta-D-ribosyl)glycinamide-binding positions include 25 to 26 and glutamate 85; that span reads EL. ATP-binding positions include arginine 118, lysine 159, 164 to 169, 199 to 202, and glutamate 207; these read SSGKGQ and EGFI. One can recognise an ATP-grasp domain in the interval 123-318; the sequence is RLAAEELGLA…EFELHARAIL (196 aa). Mg(2+) is bound by residues glutamate 277 and glutamate 289. N(1)-(5-phospho-beta-D-ribosyl)glycinamide-binding positions include aspartate 296, lysine 365, and 372–373; that span reads RR.

Belongs to the PurK/PurT family. In terms of assembly, homodimer.

The enzyme catalyses N(1)-(5-phospho-beta-D-ribosyl)glycinamide + formate + ATP = N(2)-formyl-N(1)-(5-phospho-beta-D-ribosyl)glycinamide + ADP + phosphate + H(+). The protein operates within purine metabolism; IMP biosynthesis via de novo pathway; N(2)-formyl-N(1)-(5-phospho-D-ribosyl)glycinamide from N(1)-(5-phospho-D-ribosyl)glycinamide (formate route): step 1/1. Involved in the de novo purine biosynthesis. Catalyzes the transfer of formate to 5-phospho-ribosyl-glycinamide (GAR), producing 5-phospho-ribosyl-N-formylglycinamide (FGAR). Formate is provided by PurU via hydrolysis of 10-formyl-tetrahydrofolate. In Burkholderia vietnamiensis (strain G4 / LMG 22486) (Burkholderia cepacia (strain R1808)), this protein is Formate-dependent phosphoribosylglycinamide formyltransferase.